Reading from the N-terminus, the 311-residue chain is tRNA dimethylallyltransferase (311 aa).

Residue 14–21 coordinates ATP; the sequence is GPTAVGKT. 16–21 lines the substrate pocket; that stretch reads TAVGKT. Positions 39–42 are interaction with substrate tRNA; sequence DSMQ.

It belongs to the IPP transferase family. As to quaternary structure, monomer. It depends on Mg(2+) as a cofactor.

The catalysed reaction is adenosine(37) in tRNA + dimethylallyl diphosphate = N(6)-dimethylallyladenosine(37) in tRNA + diphosphate. Functionally, catalyzes the transfer of a dimethylallyl group onto the adenine at position 37 in tRNAs that read codons beginning with uridine, leading to the formation of N6-(dimethylallyl)adenosine (i(6)A). The protein is tRNA dimethylallyltransferase of Lactiplantibacillus plantarum (strain ATCC BAA-793 / NCIMB 8826 / WCFS1) (Lactobacillus plantarum).